The following is a 170-amino-acid chain: Peptide deformylase (170 aa).

Residues cysteine 94 and histidine 136 each contribute to the Fe cation site. Glutamate 137 is an active-site residue. Histidine 140 contributes to the Fe cation binding site.

The protein belongs to the polypeptide deformylase family. The cofactor is Fe(2+).

It carries out the reaction N-terminal N-formyl-L-methionyl-[peptide] + H2O = N-terminal L-methionyl-[peptide] + formate. Its function is as follows. Removes the formyl group from the N-terminal Met of newly synthesized proteins. Requires at least a dipeptide for an efficient rate of reaction. N-terminal L-methionine is a prerequisite for activity but the enzyme has broad specificity at other positions. In Stenotrophomonas maltophilia (strain K279a), this protein is Peptide deformylase.